A 285-amino-acid polypeptide reads, in one-letter code: Methylamine utilization protein MauF (285 aa).

The next 7 helical transmembrane spans lie at 39-59 (LGGL…LSQT), 63-83 (GVAV…LSTW), 120-140 (AVGA…LGFG), 144-164 (FGAL…QLGF), 184-204 (FPVW…YLTY), 209-229 (ILYL…AILL), and 265-285 (ALLD…FAAL).

The protein resides in the cell membrane. It participates in one-carbon metabolism; methylamine degradation. The polypeptide is Methylamine utilization protein MauF (mauF) (Methylorubrum extorquens (strain ATCC 14718 / DSM 1338 / JCM 2805 / NCIMB 9133 / AM1) (Methylobacterium extorquens)).